A 35-amino-acid chain; its full sequence is Mu-thomitoxin-Hme1c (35 aa).

Disulfide bonds link Cys2/Cys18, Cys9/Cys23, and Cys17/Cys34.

The protein belongs to the neurotoxin 07 (Beta/delta-agtx) family. Expressed by the venom gland.

The protein localises to the secreted. Its function is as follows. Gating-modifier toxin that inhibits mammalian and insect voltage-gated sodium channels. It shifts the voltage dependence of channel activation to more positive voltages. It shows potent activity on Nav1.4/SCN4A (IC(50)=103 nM), Nav1.5/SCN5A (IC(50)=268 nM) and Para/DmNav1 (IC(50)=555 nM) and lower activities on Nav1.2/SCN2A (IC(50)=1447 nM) and Nav1.6/SCN8A (IC(50)=3504 nM). In addition, at a concentration of 1 uM, the toxin inhibits 90-100% of sodium current through Nav1.2/SCN2A, Nav1.4/SCN4A, Nav1.5/SCN5A, Nav1.6/SCN8A and Para/DmNav1 channels, when the voltage of maximal activation of the channel in control conditions is applied. It binds to the S3-S4 helix-loop-helix motif in the voltage-sensing domain of repeat 1 (shown on hNav1.4/SCN4A). The toxin is amphiphilic and binds to both neutral and negatively charged lipid vesicles with high affinity. The hydrophobic face lies on the opposite side to the hydrophobic faces of classical gating modifiers. In Heriaeus mellotteei (Crab spider), this protein is Mu-thomitoxin-Hme1c.